Reading from the N-terminus, the 156-residue chain is Calglandulin (156 aa).

EF-hand domains are found at residues 8–43 (EQIT…IGIN), 44–79 (PTKR…YHEK), 82–117 (NQDE…AGEP), and 118–153 (LNEH…ESFK). Ca(2+) is bound by residues Asp131, Asp133, Asp135, Thr137, and Glu142.

It belongs to the calmodulin family. Calglandulin subfamily. As to expression, expressed by the venom gland.

It is found in the cytoplasm. Functionally, may be involved in the cellular control mechanism of the secretion of toxins from the gland into the venom. The protein is Calglandulin of Hoplocephalus stephensii (Stephens's banded snake).